The sequence spans 139 residues: Peptide methionine sulfoxide reductase MsrB (139 aa).

One can recognise a MsrB domain in the interval 8–130 (DREWQRELSP…NSASLQLKTQ (123 aa)). Cys47, Cys50, Cys96, and Cys99 together coordinate Zn(2+). The active-site Nucleophile is the Cys119.

Belongs to the MsrB Met sulfoxide reductase family. The cofactor is Zn(2+).

The catalysed reaction is L-methionyl-[protein] + [thioredoxin]-disulfide + H2O = L-methionyl-(R)-S-oxide-[protein] + [thioredoxin]-dithiol. The chain is Peptide methionine sulfoxide reductase MsrB from Acinetobacter baumannii (strain AB307-0294).